The sequence spans 591 residues: L-fucose isomerase (591 aa).

Residues Glu-337 and Asp-361 each act as proton acceptor in the active site. Residues Glu-337, Asp-361, and His-528 each coordinate Mn(2+).

Belongs to the L-fucose isomerase family. Homohexamer. Requires Mn(2+) as cofactor.

It is found in the cytoplasm. The catalysed reaction is L-fucose = L-fuculose. It functions in the pathway carbohydrate degradation; L-fucose degradation; L-lactaldehyde and glycerone phosphate from L-fucose: step 1/3. Converts the aldose L-fucose into the corresponding ketose L-fuculose. The polypeptide is L-fucose isomerase (Escherichia coli O17:K52:H18 (strain UMN026 / ExPEC)).